The sequence spans 281 residues: 4-hydroxy-3-methylbut-2-enyl diphosphate reductase (281 aa).

[4Fe-4S] cluster is bound at residue Cys12. (2E)-4-hydroxy-3-methylbut-2-enyl diphosphate-binding residues include His41 and His74. The dimethylallyl diphosphate site is built by His41 and His74. Residues His41 and His74 each coordinate isopentenyl diphosphate. [4Fe-4S] cluster is bound at residue Cys96. A (2E)-4-hydroxy-3-methylbut-2-enyl diphosphate-binding site is contributed by His124. Residue His124 participates in dimethylallyl diphosphate binding. His124 contributes to the isopentenyl diphosphate binding site. The active-site Proton donor is the Glu126. Residue Thr164 coordinates (2E)-4-hydroxy-3-methylbut-2-enyl diphosphate. Residue Cys193 participates in [4Fe-4S] cluster binding. The (2E)-4-hydroxy-3-methylbut-2-enyl diphosphate site is built by Ser221, Asn223, and Ser265. Residues Ser221, Asn223, and Ser265 each coordinate dimethylallyl diphosphate. Isopentenyl diphosphate contacts are provided by Ser221, Asn223, and Ser265.

It belongs to the IspH family. It depends on [4Fe-4S] cluster as a cofactor.

It catalyses the reaction isopentenyl diphosphate + 2 oxidized [2Fe-2S]-[ferredoxin] + H2O = (2E)-4-hydroxy-3-methylbut-2-enyl diphosphate + 2 reduced [2Fe-2S]-[ferredoxin] + 2 H(+). The catalysed reaction is dimethylallyl diphosphate + 2 oxidized [2Fe-2S]-[ferredoxin] + H2O = (2E)-4-hydroxy-3-methylbut-2-enyl diphosphate + 2 reduced [2Fe-2S]-[ferredoxin] + 2 H(+). It participates in isoprenoid biosynthesis; dimethylallyl diphosphate biosynthesis; dimethylallyl diphosphate from (2E)-4-hydroxy-3-methylbutenyl diphosphate: step 1/1. It functions in the pathway isoprenoid biosynthesis; isopentenyl diphosphate biosynthesis via DXP pathway; isopentenyl diphosphate from 1-deoxy-D-xylulose 5-phosphate: step 6/6. Its function is as follows. Catalyzes the conversion of 1-hydroxy-2-methyl-2-(E)-butenyl 4-diphosphate (HMBPP) into a mixture of isopentenyl diphosphate (IPP) and dimethylallyl diphosphate (DMAPP). Acts in the terminal step of the DOXP/MEP pathway for isoprenoid precursor biosynthesis. The polypeptide is 4-hydroxy-3-methylbut-2-enyl diphosphate reductase (Nitratidesulfovibrio vulgaris (strain DSM 19637 / Miyazaki F) (Desulfovibrio vulgaris)).